Here is a 169-residue protein sequence, read N- to C-terminus: Transcription regulatory protein SNF11 (169 aa).

A disordered region spans residues 1 to 24 (MSSEIAYSNTNTNTENENRNTGAG). The residue at position 2 (serine 2) is an N-acetylserine. The span at 9–21 (NTNTNTENENRNT) shows a compositional bias: low complexity. 8 tandem repeats follow at residues 28–31 (NTNA), 32–35 (NANA), 36–39 (NATA), 40–43 (NATA), 44–47 (NATA), 48–51 (NATA), 76–80 (LLARV), and 160–165 (LLLARV). A 6 X 4 AA tandem repeats of N-[AT]-[NT]-A region spans residues 28–51 (NTNANANANATANATANATANATA). The interval 76–165 (LLARVIQMNN…SKLYLLLARV (90 aa)) is 2 X 5 AA repeats of L-L-A-R-V.

As to quaternary structure, component of the SWI/SNF global transcription activator complex. The 1.14 MDa SWI/SNF complex is composed of 11 different subunits: one copy each of SWI1, SNF2/SWI2, SNF5, SNF12/SWP73, ARP7/SWP61, ARP9/SWP59; two copies each of SWI3, SNF6, SNF11, SWP82; and three copies of TAF14/SWP29.

The protein resides in the nucleus. Functionally, involved in transcriptional activation. Component of the SWI/SNF complex, an ATP-dependent chromatin remodeling complex, which is required for the positive and negative regulation of gene expression of a large number of genes. It changes chromatin structure by altering DNA-histone contacts within a nucleosome, leading eventually to a change in nucleosome position, thus facilitating or repressing binding of gene-specific transcription factors. The protein is Transcription regulatory protein SNF11 (SNF11) of Saccharomyces cerevisiae (strain ATCC 204508 / S288c) (Baker's yeast).